The chain runs to 599 residues: Laccase-2 (599 aa).

Residues 1-19 (MARSTTSLFALSLVASAFA) form the signal peptide. Plastocyanin-like domains follow at residues 21–145 (VVDY…IVIY) and 157–307 (VDDE…LVYE). Residues H82, H84, H127, and H129 each coordinate Cu cation. A disulfide bond links C103 and C588. Residues N207, N208, N231, N397, and N443 are each glycosylated (N-linked (GlcNAc...) asparagine). In terms of domain architecture, Plastocyanin-like 3 spans 450 to 567 (DVPTLLKILT…EGFAMVFAEA (118 aa)). The Cu cation site is built by H497, H500, H502, H549, C550, H551, and H555.

It belongs to the multicopper oxidase family. As to quaternary structure, homodimer. It depends on Cu cation as a cofactor. As to expression, in mycelia, at a lower level than LCC4.

The protein localises to the secreted. The catalysed reaction is 4 hydroquinone + O2 = 4 benzosemiquinone + 2 H2O. In terms of biological role, lignin degradation and detoxification of lignin-derived products. In Thanatephorus cucumeris (Black scurf of potato), this protein is Laccase-2 (LCC2).